Reading from the N-terminus, the 172-residue chain is Peptide deformylase 1 (172 aa).

C91 and H133 together coordinate Fe cation. E134 is a catalytic residue. Residue H137 coordinates Fe cation.

It belongs to the polypeptide deformylase family. Fe(2+) serves as cofactor.

The catalysed reaction is N-terminal N-formyl-L-methionyl-[peptide] + H2O = N-terminal L-methionyl-[peptide] + formate. Removes the formyl group from the N-terminal Met of newly synthesized proteins. Requires at least a dipeptide for an efficient rate of reaction. N-terminal L-methionine is a prerequisite for activity but the enzyme has broad specificity at other positions. This chain is Peptide deformylase 1, found in Vibrio parahaemolyticus serotype O3:K6 (strain RIMD 2210633).